Consider the following 1388-residue polypeptide: Rho-associated protein kinase 2 (1388 aa).

Positions 1–24 (MSRPPPTGKMPGAPEAVSGDGAGA) are disordered. The Protein kinase domain occupies 92 to 354 (YDVVKVIGRG…VEEIKQHPFF (263 aa)). ATP is bound by residues 98-106 (IGRGAFGEV) and K121. D214 acts as the Proton acceptor in catalysis. In terms of domain architecture, AGC-kinase C-terminal spans 357–425 (DQWNWDNIRE…YRENLLLSDS (69 aa)). The segment at 363-784 (NIRETAAPVV…INELLKQKDV (422 aa)) is interaction with PPP1R12A. The interaction with NPM1 stretch occupies residues 373–420 (PELSSDIDSSNFDDIEDDKGDVETFPIPKAFVGNQLPFIGFTYYRENL). T414 bears the Phosphothreonine; by ROCK2 mark. One can recognise an REM-1 domain in the interval 497 to 573 (ALRQLEREKA…LDETNALLRT (77 aa)). A compositionally biased stretch (basic and acidic residues) spans 512–530 (NAEYQRKADHEADKKRNLE). The interval 512 to 532 (NAEYQRKADHEADKKRNLEND) is disordered. Y722 is subject to Phosphotyrosine; by SRC. Residues 979–1047 (TSDVANLANE…LAEIMNRKEP (69 aa)) enclose the RhoBD domain. The tract at residues 979–1047 (TSDVANLANE…LAEIMNRKEP (69 aa)) is RHOA binding. A coiled-coil region spans residues 1054-1126 (TDMRRKEKEN…EQLRSQLQAL (73 aa)). S1137 bears the Phosphoserine mark. Residues 1150–1349 (ESRLEGWLSL…WVSRLVKKIP (200 aa)) enclose the PH domain. Phosphothreonine is present on T1212. The segment at 1260–1315 (GHEFIPTLYHFPTNCEACMKPLWHMFKPPPALECRRCHIKCHKDHMDKKEEIIAPC) adopts a Phorbol-ester/DAG-type zinc-finger fold. Positions 1345 to 1388 (VKKIPKKPPAPDPFARSSPRTSMKIQQNQSIRRPSRQLAANKPS) are disordered. 2 positions are modified to phosphoserine: S1362 and S1374. The span at 1362-1376 (SPRTSMKIQQNQSIR) shows a compositional bias: polar residues.

This sequence belongs to the protein kinase superfamily. AGC Ser/Thr protein kinase family. As to quaternary structure, homodimer. Interacts with IRS1. Interacts with RAF1. Interacts with RHOA (activated by GTP), RHOB and RHOC. Interacts with PPP1R12A. Interacts with EP300. Interacts with CHORDC1. Interacts with BRCA2. Interacts with NPM1; this interaction enhances ROCK2 activity. Interacts with SORL1. Interacts with PJVK. Mg(2+) serves as cofactor. Post-translationally, autophosphorylated. Phosphorylation at Tyr-722 reduces its binding to RHOA and is crucial for focal adhesion dynamics. Dephosphorylation by PTPN11 stimulates its RHOA binding activity. In terms of processing, cleaved by granzyme B during apoptosis. This leads to constitutive activation of the kinase and membrane blebbing.

It is found in the cytoplasm. Its subcellular location is the cell membrane. It localises to the nucleus. The protein localises to the cytoskeleton. The protein resides in the microtubule organizing center. It is found in the centrosome. The enzyme catalyses L-seryl-[protein] + ATP = O-phospho-L-seryl-[protein] + ADP + H(+). It carries out the reaction L-threonyl-[protein] + ATP = O-phospho-L-threonyl-[protein] + ADP + H(+). With respect to regulation, activated by RHOA binding. Inhibited by Y-27632. Functionally, protein kinase which is a key regulator of actin cytoskeleton and cell polarity. Involved in regulation of smooth muscle contraction, actin cytoskeleton organization, stress fiber and focal adhesion formation, neurite retraction, cell adhesion and motility via phosphorylation of ADD1, BRCA2, CNN1, EZR, DPYSL2, EP300, MSN, MYL9/MLC2, NPM1, RDX, PPP1R12A and VIM. Phosphorylates SORL1 and IRF4. Acts as a negative regulator of VEGF-induced angiogenic endothelial cell activation. Positively regulates the activation of p42/MAPK1-p44/MAPK3 and of p90RSK/RPS6KA1 during myogenic differentiation. Plays an important role in the timely initiation of centrosome duplication. Inhibits keratinocyte terminal differentiation. May regulate closure of the eyelids and ventral body wall through organization of actomyosin bundles. Plays a critical role in the regulation of spine and synaptic properties in the hippocampus. Plays an important role in generating the circadian rhythm of the aortic myofilament Ca(2+) sensitivity and vascular contractility by modulating the myosin light chain phosphorylation. In Sus scrofa (Pig), this protein is Rho-associated protein kinase 2 (ROCK2).